Reading from the N-terminus, the 655-residue chain is Very long-chain specific acyl-CoA dehydrogenase, mitochondrial (655 aa).

The N-terminal 40 residues, 1–40 (MQSARMTPSVGRQLLRLGARSSRSAALQGQPRPTSAQRLY), are a transit peptide targeting the mitochondrion. The disordered stretch occupies residues 1–70 (MQSARMTPSV…TREKPARAES (70 aa)). Polar residues predominate over residues 21 to 37 (SSRSAALQGQPRPTSAQ). A catalytic region spans residues 41–482 (ASEATQAVLE…ALQGCMDKGK (442 aa)). Residue lysine 51 is modified to N6-acetyllysine. Residues 60–70 (STREKPARAES) are compositionally biased toward basic and acidic residues. N6-acetyllysine; alternate is present on residues lysine 71 and lysine 127. Residues lysine 71 and lysine 127 each carry the N6-succinyllysine; alternate modification. Lysine 195 is modified (N6-succinyllysine). 214-223 (FCLTEPSSGS) contacts FAD. Position 237 is an S-nitrosocysteine (cysteine 237). The residue at position 239 (lysine 239) is an N6-acetyllysine; alternate. Lysine 239 is modified (N6-succinyllysine; alternate). Position 249–251 (249–251 (WIS)) interacts with FAD. Lysine 268 is modified (N6-succinyllysine). An N6-acetyllysine; alternate mark is found at lysine 276 and lysine 278. N6-succinyllysine; alternate occurs at positions 276 and 278. Lysine 298 and lysine 316 each carry N6-acetyllysine. At lysine 331 the chain carries N6-acetyllysine; alternate. Lysine 331 is modified (N6-succinyllysine; alternate). N6-succinyllysine is present on lysine 372. 461-463 (FEG) provides a ligand contact to substrate. The active-site Proton acceptor is glutamate 462. 464–466 (TND) provides a ligand contact to FAD. N6-acetyllysine; alternate is present on lysine 482. Lysine 482 is subject to N6-succinyllysine; alternate. Residues 483-516 (ELTGLGNALKNPLGNVGLLIGEASKQLRRRTGIG) are membrane-anchoring. 2 positions are modified to phosphoserine: serine 517 and serine 522. Lysine 550 is subject to N6-acetyllysine. Lysine 556 bears the N6-acetyllysine; alternate mark. Lysine 556 carries the post-translational modification N6-succinyllysine; alternate. Glutamine 562 contributes to the FAD binding site. Residue lysine 639 is modified to N6-succinyllysine.

Belongs to the acyl-CoA dehydrogenase family. In terms of assembly, homodimer. Homodimerizes after import into the mitochondrion. FAD serves as cofactor. Post-translationally, S-nitrosylation at Cys-237 in liver improves catalytic efficiency. As to expression, widely expressed (at protein level).

It is found in the mitochondrion inner membrane. The catalysed reaction is a very-long-chain 2,3-saturated fatty acyl-CoA + oxidized [electron-transfer flavoprotein] + H(+) = a very-long-chain (2E)-enoyl-CoA + reduced [electron-transfer flavoprotein]. It carries out the reaction dodecanoyl-CoA + oxidized [electron-transfer flavoprotein] + H(+) = (2E)-dodecenoyl-CoA + reduced [electron-transfer flavoprotein]. It catalyses the reaction tetradecanoyl-CoA + oxidized [electron-transfer flavoprotein] + H(+) = (2E)-tetradecenoyl-CoA + reduced [electron-transfer flavoprotein]. The enzyme catalyses oxidized [electron-transfer flavoprotein] + hexadecanoyl-CoA + H(+) = (2E)-hexadecenoyl-CoA + reduced [electron-transfer flavoprotein]. The catalysed reaction is octadecanoyl-CoA + oxidized [electron-transfer flavoprotein] + H(+) = (2E)-octadecenoyl-CoA + reduced [electron-transfer flavoprotein]. It carries out the reaction eicosanoyl-CoA + oxidized [electron-transfer flavoprotein] + H(+) = (2E)-eicosenoyl-CoA + reduced [electron-transfer flavoprotein]. It catalyses the reaction docosanoyl-CoA + oxidized [electron-transfer flavoprotein] + H(+) = (2E)-docosenoyl-CoA + reduced [electron-transfer flavoprotein]. The enzyme catalyses tetracosanoyl-CoA + oxidized [electron-transfer flavoprotein] + H(+) = (2E)-tetracosenoyl-CoA + reduced [electron-transfer flavoprotein]. Its pathway is lipid metabolism; mitochondrial fatty acid beta-oxidation. Functionally, very long-chain specific acyl-CoA dehydrogenase is one of the acyl-CoA dehydrogenases that catalyze the first step of mitochondrial fatty acid beta-oxidation, an aerobic process breaking down fatty acids into acetyl-CoA and allowing the production of energy from fats. The first step of fatty acid beta-oxidation consists in the removal of one hydrogen from C-2 and C-3 of the straight-chain fatty acyl-CoA thioester, resulting in the formation of trans-2-enoyl-CoA. Among the different mitochondrial acyl-CoA dehydrogenases, very long-chain specific acyl-CoA dehydrogenase acts specifically on acyl-CoAs with saturated 12 to 24 carbons long primary chains. This is Very long-chain specific acyl-CoA dehydrogenase, mitochondrial from Rattus norvegicus (Rat).